Reading from the N-terminus, the 1091-residue chain is Rho GTPase-activating protein 7 (1091 aa).

In terms of domain architecture, SAM spans 11–78 (LTQIEAKEAC…LNKCAVMKLE (68 aa)). Ser86, Ser89, and Ser129 each carry phosphoserine. 4 disordered regions span residues 120–181 (SPKQ…TTPR), 296–329 (RSVS…TRSL), 402–439 (RTGS…SSRM), and 491–552 (SDEG…SGVG). Polar residues predominate over residues 130–143 (PDNSRLQSATSRES). Low complexity-rich tracts occupy residues 155-166 (SSIRSLSSTSSS) and 298-324 (VSNS…SPVT). The interval 274 to 447 (QLNCVEISAL…RMSIYDNVPG (174 aa)) is focal adhesion-targeting (FAT). Ser321 bears the Phosphoserine mark. Over residues 414 to 425 (LRRENSSDSPKE) the composition is skewed to basic and acidic residues. Over residues 499–511 (ALDSVSPCPSSPK) the composition is skewed to polar residues. The segment covering 513–525 (IHLDVDHDRRTPS) has biased composition (basic and acidic residues). The segment covering 526-535 (DLDSTGNSLN) has biased composition (polar residues). The tract at residues 614–636 (KHGFSWAVPKFMKRIKVPDYKDR) is polybasic cluster (PBR). A Rho-GAP domain is found at 641–847 (VPLTVNVQRS…HMIAECKKLF (207 aa)). Positions 877–1084 (SNDQPADYRH…RDSFSNQSTE (208 aa)) constitute an START domain.

In terms of assembly, interacts with EF1A1, facilitates EF1A1 distribution to the membrane periphery and ruffles upon growth factor stimulation and suppresses cell migration. Interacts with tensin TNS1 (via N-terminus); the interaction is decreased by phosphorylation of TNS1. Interacts with TNS3 and PTEN; in resting cells, interacts with TNS3 (via C2 tensin-type domain) but, following growth factor stimulation, TNS3 and PTEN are phosphorylated which leads to weakened interaction with TNS3 and enhanced interaction with PTEN. Interacts (via C-terminus) with tensin TNS4 (via SH2 domain); the interaction is independent of tyrosine phosphorylation of DLC1.

It localises to the cytoplasm. It is found in the cell junction. Its subcellular location is the focal adhesion. The protein localises to the membrane. In terms of biological role, functions as a GTPase-activating protein for the small GTPases RHOA, RHOB, RHOC and CDC42, terminating their downstream signaling. This induces morphological changes and detachment through cytoskeletal reorganization, playing a critical role in biological processes such as cell migration and proliferation. Also functions in vivo as an activator of the phospholipase PLCD1. Active DLC1 increases cell migration velocity but reduces directionality. Required for growth factor-induced epithelial cell migration; in resting cells, interacts with TNS3 while PTEN interacts with the p85 regulatory subunit of the PI3K kinase complex but growth factor stimulation induces phosphorylation of TNS3 and PTEN, causing them to change their binding preference so that PTEN interacts with DLC1 and TNS3 interacts with p85. The PTEN-DLC1 complex translocates to the posterior of migrating cells to activate RHOA while the TNS3-p85 complex translocates to the leading edge of migrating cells to promote RAC1 activation. The polypeptide is Rho GTPase-activating protein 7 (Dlc1) (Rattus norvegicus (Rat)).